The sequence spans 207 residues: Outer-membrane lipoprotein LolB (207 aa).

The N-terminal stretch at Met-1–Ser-26 is a signal peptide. Cys-27 carries the N-palmitoyl cysteine lipid modification. Residue Cys-27 is the site of S-diacylglycerol cysteine attachment.

It belongs to the LolB family. In terms of assembly, monomer.

Its subcellular location is the cell outer membrane. Plays a critical role in the incorporation of lipoproteins in the outer membrane after they are released by the LolA protein. The polypeptide is Outer-membrane lipoprotein LolB (Francisella tularensis subsp. tularensis (strain WY96-3418)).